The primary structure comprises 834 residues: Protein kintoun (834 aa).

Disordered regions lie at residues 214 to 239 (TAEEQEPHPLAHMFPTKPPAPGKQEP), 374 to 415 (SRED…SVAP), 547 to 669 (KGKV…STGR), and 759 to 834 (KKNQ…EMDD). Phosphoserine is present on S378. The segment covering 389–398 (PVEEDPDGEL) has biased composition (acidic residues). The segment covering 552–571 (AKKDNAPLDVKFERNQEGHA) has biased composition (basic and acidic residues). A compositionally biased stretch (acidic residues) spans 582 to 596 (EEEEDKENQDQEPES). Over residues 597-607 (DQQQQQQVQNK) the composition is skewed to low complexity. 2 stretches are compositionally biased toward basic residues: residues 608-619 (KPGKKQRKKNKK) and 759-773 (KKNQKRRDLKLRAQQ). Phosphoserine is present on S777. The span at 785–798 (EETRGSALKQEENP) shows a compositional bias: basic and acidic residues.

It belongs to the PIH1 family. Kintoun subfamily. In terms of assembly, interacts with Pp1alpha-96A, Pp1-87B, Pp1-13C and flw.

It localises to the cytoplasm. Required for cytoplasmic pre-assembly of axonemal dyneins, thereby playing a central role in motility in cilia and flagella. Involved in pre-assembly of dynein arm complexes in the cytoplasm before intraflagellar transport loads them for the ciliary compartment. The chain is Protein kintoun from Drosophila melanogaster (Fruit fly).